A 354-amino-acid polypeptide reads, in one-letter code: MAELKNDRYLRALLKQPVDATPVWMMRQAGRYLPEYKATRAQAGDFMSLCRNAELACEVTLQPLRRYKLDAAILFSDILTVPDAMGLGLYFEEGEGPRFERPTDTVDAIKKLCIPDPEDELGYVMRAVSTIRRELKGEVPLIGFSGSPWTLATYMVEGGSSKTFEKIKKMAYAEPAALHMLLDKLADSVILYLNAQVANGAQSLMIFDSWGGALSHHAYREFSLRYMQKIVDGLTRFADGRQVPVTLFTKGGGLWLESMAETGCDALGLDWTVDIGDARRRVGDKVALQGNMDPSMLYASPERIHQEVGQILSSYGKGTGHVFNLGHGIHQHVDPEHAGAFINSVHELSPQYHK.

Residues 27-31, Asp77, Tyr154, Ser209, and His327 each bind substrate; that span reads RQAGR.

Belongs to the uroporphyrinogen decarboxylase family. In terms of assembly, homodimer.

Its subcellular location is the cytoplasm. The catalysed reaction is uroporphyrinogen III + 4 H(+) = coproporphyrinogen III + 4 CO2. The protein operates within porphyrin-containing compound metabolism; protoporphyrin-IX biosynthesis; coproporphyrinogen-III from 5-aminolevulinate: step 4/4. Catalyzes the decarboxylation of four acetate groups of uroporphyrinogen-III to yield coproporphyrinogen-III. The polypeptide is Uroporphyrinogen decarboxylase (Shewanella denitrificans (strain OS217 / ATCC BAA-1090 / DSM 15013)).